The sequence spans 261 residues: Protein STAY-GREEN, chloroplastic (261 aa).

The N-terminal 54 residues, 1–54, are a transit peptide targeting the chloroplast; sequence MDTLTSAPLLTTKFKPSFSPQQKPCFPHRRRFENGKKNQSIVPVARLFGPAIFE.

It belongs to the staygreen family.

It is found in the plastid. Its subcellular location is the chloroplast. Probably involved in the disassembling mechanism of the intact light-harvesting complex of photosystem II (LHCII) in the thylakoid membranes. Required for the chlorophyll breakdown pathway. Acts independent and upstream of pheophorbide a oxygenase (PAO). This chain is Protein STAY-GREEN, chloroplastic (SGR), found in Pisum sativum (Garden pea).